A 159-amino-acid polypeptide reads, in one-letter code: Transcriptional repressor NrdR (159 aa).

Residues 1–11 (MQCPTCQNTDS) show a composition bias toward polar residues. Residues 1–21 (MQCPTCQNTDSRVLESRSADS) form a disordered region. Residues 3–34 (CPTCQNTDSRVLESRSADSGKSVRRRRECLNC) fold into a zinc finger. The region spanning 49 to 139 (VSVLKKDGGR…VYRKFNGVKD (91 aa)) is the ATP-cone domain.

The protein belongs to the NrdR family. Zn(2+) serves as cofactor.

In terms of biological role, negatively regulates transcription of bacterial ribonucleotide reductase nrd genes and operons by binding to NrdR-boxes. The protein is Transcriptional repressor NrdR of Prochlorococcus marinus (strain AS9601).